A 617-amino-acid polypeptide reads, in one-letter code: MDISAAVFNAARDGKLKLMQKLLINKSPEERAALAEERTEGGTPLLIAARYGHLPVVHFLLERCGANVALGGSVNFDGETIEGAPPLWAASAAGHLPVVKALLEHGAPVNNTTLTNSTPLRAACFDGHLEIVRYLVEHQADLEVANRHGHTCLMISCYKGHREIAQFLLEKGADVNRKSVKGNTALHDCAESGSLEIMKMLLKCDARMERDGYGMTPLLAASVTGHTNIVEFLVHQPRASREQRIHALELLGATFVDKKRDLLGAMRYWRRAMELRWAGGQAGALEKPTAGPLVPAYDCSREVSTAEELEALITDPDDMRMQALLVRERILGPAHPDTSYYIRYRGAVYADSGNFERCIRLWKYALDMQQSNLEPLSPMTASSFLSFAELFSFVLQDRAKGTLAARVSFQDLMGVLSKSVREVERAVAQRERPPEPPQFSKALSIILHLLFLLQKLRCGPEQEHLKRQTVYRLLKLNPRARGGHTPLHMAVDRDTTSVGRYPVGRFPSLAVASLLLECGADVDSRDYDNNTPLHIAAANGCPDIMAALIRAGAHFDATNAAQQTAYQLLEAQSSGRHALHPLNHTTLQCLAARAVTAHRLPYKGLISEQMEAFIELH.

ANK repeat units follow at residues 2–32 (DISA…EERA), 40–70 (EGGT…NVAL), 82–111 (EGAP…PVNN), 115–144 (TNST…DLEV), 148–177 (HGHT…DVNR), 181–210 (KGNT…RMER), and 213–242 (YGMT…ASRE). 2 TPR repeats span residues 245–279 (IHAL…RWAG) and 339–372 (SYYI…QQSN). ANK repeat units lie at residues 482 to 524 (GGHT…DVDS) and 528 to 557 (DNNT…HFDA).

It belongs to the fem-1 family. In terms of assembly, component of a CRL2 E3 ubiquitin-protein ligase complex, also named ECS (Elongin BC-CUL2/5-SOCS-box protein) complex.

It is found in the mitochondrion. The protein resides in the cytoplasm. It participates in protein modification; protein ubiquitination. In terms of biological role, substrate-recognition component of a Cul2-RING (CRL2) E3 ubiquitin-protein ligase complex of the DesCEND (destruction via C-end degrons) pathway, which recognizes a C-degron located at the extreme C terminus of target proteins, leading to their ubiquitination and degradation. The C-degron recognized by the DesCEND pathway is usually a motif of less than ten residues and can be present in full-length proteins, truncated proteins or proteolytically cleaved forms. The CRL2(FEM1A) complex specifically recognizes proteins with an arginine at the C-terminus: recognizes and binds proteins ending with -Lys/Arg-Xaa-Arg and -Lys/Arg-Xaa-Xaa-Arg C-degrons, leading to their ubiquitination and degradation. This is Protein fem-1 homolog A from Danio rerio (Zebrafish).